The primary structure comprises 727 residues: BRCA1-A complex subunit RAP80 (727 aa).

A disordered region spans residues 1-23; sequence MPRRKKKIKEASESQNLEKKDLE. Positions 1-101 are necessary for transcriptional repression; it reads MPRRKKKIKE…SEQEAREVNN (101 aa). Over residues 9-23 the composition is skewed to basic and acidic residues; sequence KEASESQNLEKKDLE. Lys20 participates in a covalent cross-link: Glycyl lysine isopeptide (Lys-Gly) (interchain with G-Cter in SUMO2). Phosphoserine is present on Ser29. Lys31 participates in a covalent cross-link: Glycyl lysine isopeptide (Lys-Gly) (interchain with G-Cter in SUMO2). Residues Ser44 and Ser46 each carry the phosphoserine modification. Residues 45 to 70 are disordered; that stretch reads DSDGEETKEENGLQKTKTKQSNRSKC. Thr51 carries the post-translational modification Phosphothreonine. Residues 60-70 are compositionally biased toward basic residues; the sequence is TKTKQSNRSKC. An LR motif motif is present at residues 60-78; sequence TKTKQSNRSKCLAKRKVAH. Glycyl lysine isopeptide (Lys-Gly) (interchain with G-Cter in SUMO2) cross-links involve residues Lys75 and Lys90. UIM domains are found at residues 80 to 99 and 104 to 124; these read SEEE…AREV and EKEE…CWSS. The segment at 97–103 is UIM-linker; sequence REVNNQE. The segment at 100–200 is necessary for interaction with NR6A1 N-terminus; it reads NNQEEKEEEL…EEPVSGSSGS (101 aa). Positions 133-206 are disordered; sequence PLAAELSSHS…SSGSWDQSSQ (74 aa). A Phosphoserine modification is found at Ser140. A compositionally biased stretch (basic and acidic residues) spans 176–188; that stretch reads AEQRKEPWDHNEN. Positions 195 to 206 are enriched in low complexity; that stretch reads SGSSGSWDQSSQ. A Phosphoserine modification is found at Ser205. Lys245 participates in a covalent cross-link: Glycyl lysine isopeptide (Lys-Gly) (interchain with G-Cter in SUMO2). Residues 270–400 are AIR; the sequence is TGGTVHYYWG…EEEPTTSRGQ (131 aa). The tract at residues 326-427 is disordered; it reads PRPPFLIQNE…SEGDNSVPTT (102 aa). Residues 355–364 are compositionally biased toward basic and acidic residues; the sequence is DEAKEERQES. Ser379 carries the post-translational modification Phosphoserine. Glycyl lysine isopeptide (Lys-Gly) (interchain with G-Cter in SUMO2) cross-links involve residues Lys382 and Lys387. Positions 400–508 are necessary for interaction with NR6A1 C-terminus; that stretch reads QSSQGLFVEE…ENPPPAVSSS (109 aa). Position 402 is a phosphoserine (Ser402). A Glycyl lysine isopeptide (Lys-Gly) (interchain with G-Cter in SUMO2) cross-link involves residue Lys436. Phosphoserine is present on Ser474. A UBZ4-type zinc finger spans residues 510 to 537; it reads RVSCPLCNQDFPPTKIEQHAMYCNGLME. Residues Cys513, Cys516, His528, and Cys532 each coordinate Zn(2+). The interval 513-590 is zinc-finger-like region; it reads CPLCNQDFPP…GEYQCHVEAC (78 aa). Glycyl lysine isopeptide (Lys-Gly) (interchain with G-Cter in SUMO2) cross-links involve residues Lys552, Lys570, Lys595, and Lys617. The interval 607–654 is disordered; it reads RPRVCAPVEGKQQQRLKKSKDKGHSQGRLLSLLEQSEHRTTGVEKKPK. Residue Ser637 is modified to Phosphoserine. The segment covering 641–654 has biased composition (basic and acidic residues); that stretch reads QSEHRTTGVEKKPK. Lys652 participates in a covalent cross-link: Glycyl lysine isopeptide (Lys-Gly) (interchain with G-Cter in SUMO2). A phosphoserine mark is found at Ser665 and Ser689. Lys708 is covalently cross-linked (Glycyl lysine isopeptide (Lys-Gly) (interchain with G-Cter in SUMO2)).

The protein belongs to the RAP80 family. In terms of assembly, component of the ARISC complex, at least composed of UIMC1/RAP80, ABRAXAS1, BRCC3/BRCC36, BABAM2 and BABAM1/NBA1. Component of the BRCA1-A complex, at least composed of the BRCA1, BARD1, UIMC1/RAP80, ABRAXAS1, BRCC3/BRCC36, BABAM2 and BABAM1/NBA1. In the BRCA1-A complex, interacts directly with ABRAXAS1. Interacts with ESR1. Interacts with UBE2I. Interacts with NR6A1. Interacts with TSP57. Interacts with TRAIP. In terms of processing, sumoylated. Phosphorylated upon DNA damage by ATM or ATR.

The protein localises to the nucleus. In terms of biological role, ubiquitin-binding protein. Specifically recognizes and binds 'Lys-63'-linked ubiquitin. Plays a central role in the BRCA1-A complex by specifically binding 'Lys-63'-linked ubiquitinated histones H2A and H2AX at DNA lesions sites, leading to target the BRCA1-BARD1 heterodimer to sites of DNA damage at double-strand breaks (DSBs). The BRCA1-A complex also possesses deubiquitinase activity that specifically removes 'Lys-63'-linked ubiquitin on histones H2A and H2AX. Also weakly binds monoubiquitin but with much less affinity than 'Lys-63'-linked ubiquitin. May interact with monoubiquitinated histones H2A and H2B; the relevance of such results is however unclear in vivo. Does not bind Lys-48'-linked ubiquitin. May indirectly act as a transcriptional repressor by inhibiting the interaction of NR6A1 with the corepressor NCOR1. In Mus musculus (Mouse), this protein is BRCA1-A complex subunit RAP80 (Uimc1).